Reading from the N-terminus, the 369-residue chain is Anhydro-N-acetylmuramic acid kinase (369 aa).

12 to 19 (GTSMDGVD) lines the ATP pocket.

The protein belongs to the anhydro-N-acetylmuramic acid kinase family.

The catalysed reaction is 1,6-anhydro-N-acetyl-beta-muramate + ATP + H2O = N-acetyl-D-muramate 6-phosphate + ADP + H(+). It functions in the pathway amino-sugar metabolism; 1,6-anhydro-N-acetylmuramate degradation. Its pathway is cell wall biogenesis; peptidoglycan recycling. Catalyzes the specific phosphorylation of 1,6-anhydro-N-acetylmuramic acid (anhMurNAc) with the simultaneous cleavage of the 1,6-anhydro ring, generating MurNAc-6-P. Is required for the utilization of anhMurNAc either imported from the medium or derived from its own cell wall murein, and thus plays a role in cell wall recycling. This chain is Anhydro-N-acetylmuramic acid kinase, found in Shewanella baltica (strain OS155 / ATCC BAA-1091).